The sequence spans 281 residues: L-ornithine N(alpha)-acyltransferase (281 aa).

This sequence belongs to the acetyltransferase family. OlsB subfamily.

The enzyme catalyses a (3R)-hydroxyacyl-[ACP] + L-ornithine = a lyso-ornithine lipid + holo-[ACP] + H(+). It participates in lipid metabolism. Catalyzes the first step in the biosynthesis of ornithine lipids, which are phosphorus-free membrane lipids. Catalyzes the 3-hydroxyacyl-acyl carrier protein-dependent acylation of ornithine to form lyso-ornithine lipid (LOL). In Brucella abortus (strain 2308), this protein is L-ornithine N(alpha)-acyltransferase.